The primary structure comprises 43 residues: S-layer protein 1 (43 aa).

The protein resides in the secreted. The protein localises to the cell wall. Its subcellular location is the S-layer. Its function is as follows. The S-layer is a paracrystalline mono-layered assembly of proteins which coat the surface of bacteria. The sequence is that of S-layer protein 1 from Bacillus thuringiensis subsp. konkukian.